The chain runs to 516 residues: (R)-citramalate synthase CimA (516 aa).

A Pyruvate carboxyltransferase domain is found at 8-269; sequence LEILDVTLRD…KTNINEIAIT (262 aa). R16 functions as the Proton donor in the catalytic mechanism. Residues 16-17 and Y144 contribute to the pyruvate site; that span reads RD. Position 17 (D17) interacts with Mn(2+). E146 acts as the Proton acceptor in catalysis. Residue T179 coordinates pyruvate. Mn(2+) contacts are provided by H207 and H209.

This sequence belongs to the alpha-IPM synthase/homocitrate synthase family. Homodimer. Requires Mn(2+) as cofactor.

The enzyme catalyses pyruvate + acetyl-CoA + H2O = (3R)-citramalate + CoA + H(+). The protein operates within amino-acid biosynthesis; L-isoleucine biosynthesis; 2-oxobutanoate from pyruvate: step 1/3. Its activity is regulated as follows. Regulated by the end-product isoleucine via a feedback inhibition. The binding of isoleucine has inhibitory effects on the binding of both pyruvate and acetyl-CoA. May act via conformational change of the dimer interface of the regulatory domain, leading to inhibition of the catalytic reaction. Functionally, catalyzes the condensation of pyruvate and acetyl-coenzyme A to form (R)-citramalate. Shows strict substrate specificity for pyruvate. Cannot use alpha-ketoisovalerate, alpha-ketobutyrate, alpha-ketoisocaproate, alpha-ketoglutarate or glyoxylate. The chain is (R)-citramalate synthase CimA from Leptospira interrogans serogroup Icterohaemorrhagiae serovar Lai (strain 56601).